Reading from the N-terminus, the 338-residue chain is LIX1-like protein (338 aa).

The interval 1–65 (METMRAQRLQ…LLLAGAPGLP (65 aa)) is disordered. Positions 29–38 (TGAPTSAATP) are enriched in low complexity. Pro residues predominate over residues 39 to 56 (PAGPPPAPPPPAPPPPPL).

It belongs to the LIX1 family.

The sequence is that of LIX1-like protein (Lix1l) from Rattus norvegicus (Rat).